The chain runs to 494 residues: Sucrose-6-phosphate hydrolase (494 aa).

Substrate is bound by residues 45 to 48, glutamine 64, 107 to 108, 168 to 169, and glutamate 223; these read LLND, YS, and RD. Aspartate 48 is a catalytic residue.

The protein belongs to the glycosyl hydrolase 32 family.

It catalyses the reaction Hydrolysis of terminal non-reducing beta-D-fructofuranoside residues in beta-D-fructofuranosides.. It functions in the pathway glycan biosynthesis; sucrose metabolism. The sequence is that of Sucrose-6-phosphate hydrolase (scrB) from Staphylococcus xylosus.